We begin with the raw amino-acid sequence, 579 residues long: Isocitrate dehydrogenase kinase/phosphatase (579 aa).

Residues 324–330 and Lys-345 each bind ATP; that span reads ADGTPGM. Asp-380 is a catalytic residue.

It belongs to the AceK family.

It is found in the cytoplasm. The catalysed reaction is L-seryl-[isocitrate dehydrogenase] + ATP = O-phospho-L-seryl-[isocitrate dehydrogenase] + ADP + H(+). Functionally, bifunctional enzyme which can phosphorylate or dephosphorylate isocitrate dehydrogenase (IDH) on a specific serine residue. This is a regulatory mechanism which enables bacteria to bypass the Krebs cycle via the glyoxylate shunt in response to the source of carbon. When bacteria are grown on glucose, IDH is fully active and unphosphorylated, but when grown on acetate or ethanol, the activity of IDH declines drastically concomitant with its phosphorylation. This chain is Isocitrate dehydrogenase kinase/phosphatase, found in Xanthomonas euvesicatoria pv. vesicatoria (strain 85-10) (Xanthomonas campestris pv. vesicatoria).